The chain runs to 469 residues: Serine hydroxymethyltransferase, cytosolic (469 aa).

Residue lysine 248 is modified to N6-(pyridoxal phosphate)lysine.

The protein belongs to the SHMT family. In terms of assembly, homotetramer. Requires pyridoxal 5'-phosphate as cofactor.

It localises to the cytoplasm. It carries out the reaction (6R)-5,10-methylene-5,6,7,8-tetrahydrofolate + glycine + H2O = (6S)-5,6,7,8-tetrahydrofolate + L-serine. Its pathway is one-carbon metabolism; tetrahydrofolate interconversion. Its function is as follows. Interconversion of serine and glycine. This is Serine hydroxymethyltransferase, cytosolic (SHM2) from Eremothecium gossypii (strain ATCC 10895 / CBS 109.51 / FGSC 9923 / NRRL Y-1056) (Yeast).